A 398-amino-acid polypeptide reads, in one-letter code: LIM domain-binding protein 2 (398 aa).

2 disordered regions span residues 245–280 (PPAE…TSAY) and 354–398 (DAAN…QASQ). Residues 263-279 (STNNASNSNAGNNATSA) show a composition bias toward low complexity. The 40-residue stretch at 323 to 362 (DVMVVGEPTLMGGEFGDEDERLITRLENTQYDAANGMDDE) folds into the LIM interaction domain (LID) domain.

This sequence belongs to the LDB family. In terms of tissue distribution, expressed in adult brain, lung, spleen and kidney. Isoform b is generally expressed at a higher level than isoform a.

Its subcellular location is the nucleus. Functionally, binds to the LIM domain of a wide variety of LIM domain-containing transcription factors. This chain is LIM domain-binding protein 2, found in Xenopus laevis (African clawed frog).